Reading from the N-terminus, the 117-residue chain is Immunoglobulin heavy variable 1-3 (117 aa).

Positions 1-19 are cleaved as a signal peptide; the sequence is MDWTWRILFLVAAATGAHS. The framework-1 stretch occupies residues 20-44; sequence QVQLVQSGAEVKKPGASVKVSCKAS. An Ig-like domain is found at 20–117; the sequence is QVQLVQSGAE…EDTAVYYCAR (98 aa). An intrachain disulfide couples cysteine 41 to cysteine 115. Positions 45–52 are complementarity-determining-1; the sequence is GYTFTSYA. The segment at 53-69 is framework-2; it reads MHWVRQAPGQRLEWMGW. The interval 70–77 is complementarity-determining-2; that stretch reads INAGNGNT. Residues 78-115 are framework-3; the sequence is KYSQKFQGRVTITRDTSASTAYMELSSLRSEDTAVYYC. The segment at 116–117 is complementarity-determining-3; sequence AR.

Immunoglobulins are composed of two identical heavy chains and two identical light chains; disulfide-linked.

It localises to the secreted. Its subcellular location is the cell membrane. V region of the variable domain of immunoglobulin heavy chains that participates in the antigen recognition. Immunoglobulins, also known as antibodies, are membrane-bound or secreted glycoproteins produced by B lymphocytes. In the recognition phase of humoral immunity, the membrane-bound immunoglobulins serve as receptors which, upon binding of a specific antigen, trigger the clonal expansion and differentiation of B lymphocytes into immunoglobulins-secreting plasma cells. Secreted immunoglobulins mediate the effector phase of humoral immunity, which results in the elimination of bound antigens. The antigen binding site is formed by the variable domain of one heavy chain, together with that of its associated light chain. Thus, each immunoglobulin has two antigen binding sites with remarkable affinity for a particular antigen. The variable domains are assembled by a process called V-(D)-J rearrangement and can then be subjected to somatic hypermutations which, after exposure to antigen and selection, allow affinity maturation for a particular antigen. This chain is Immunoglobulin heavy variable 1-3, found in Homo sapiens (Human).